A 300-amino-acid polypeptide reads, in one-letter code: uncharacterized protein (300 aa).

4 consecutive CBS domains span residues 10-68 (RFPP…FRDV), 88-148 (FLKY…HVKV), 152-207 (MTSE…EDVL), and 226-284 (ISSK…GVEI).

This is an uncharacterized protein from Thermofilum pendens.